Consider the following 142-residue polypeptide: MSESLVVCDVAEDLVEKLRKFRFRKETHNAAIIMKIDKDKRLVVLDEELEGVSPDELKDELPERQPRFIVYSYKYQHDDGRVSYPLCFIFSSPLGCKPEQQMMYAGSKNKLVQTAELTKVFEIRNTEDLTEEWLREKLGFFH.

Ser2 is subject to N-acetylserine. The ADF-H domain maps to 4–139 (SLVVCDVAED…TEEWLREKLG (136 aa)).

It belongs to the actin-binding proteins ADF family. GMF subfamily. In terms of processing, phosphorylated; stimulated by phorbol ester.

Its function is as follows. This protein causes differentiation of brain cells, stimulation of neural regeneration, and inhibition of proliferation of tumor cells. The chain is Glia maturation factor beta (Gmfb) from Rattus norvegicus (Rat).